Reading from the N-terminus, the 369-residue chain is IST1-like protein (369 aa).

The stretch at 12–59 (KLKVQLKLAVSRIQILKNKKANIVRDEKRNVAELLRKKNEESARIRVE) forms a coiled coil. Residues 224–354 (QIIQQQQQPQ…SSDTGYPDYD (131 aa)) are disordered. 2 stretches are compositionally biased toward low complexity: residues 225–239 (IIQQQQQPQMPSFPI) and 246–270 (PTFSQIQHQQQIQQQYQQQQQSPQF). The span at 277-305 (FYNNNSGNQTPQFPTISTNNSDGYSNDKF) shows a compositional bias: polar residues. Positions 306–337 (NNGNNNYNNNNNNNNNNNNNNNHNNNNNNNNN) are enriched in low complexity.

This sequence belongs to the IST1 family.

The chain is IST1-like protein from Dictyostelium discoideum (Social amoeba).